We begin with the raw amino-acid sequence, 247 residues long: Carboxy-S-adenosyl-L-methionine synthase (247 aa).

S-adenosyl-L-methionine is bound by residues Tyr-39, 64-66 (GCS), 89-90 (DN), 117-118 (DI), Asn-132, and Arg-199.

The protein belongs to the class I-like SAM-binding methyltransferase superfamily. Cx-SAM synthase family. As to quaternary structure, homodimer.

It carries out the reaction prephenate + S-adenosyl-L-methionine = carboxy-S-adenosyl-L-methionine + 3-phenylpyruvate + H2O. Its function is as follows. Catalyzes the conversion of S-adenosyl-L-methionine (SAM) to carboxy-S-adenosyl-L-methionine (Cx-SAM). In Salmonella choleraesuis (strain SC-B67), this protein is Carboxy-S-adenosyl-L-methionine synthase.